A 406-amino-acid polypeptide reads, in one-letter code: Mitochondrial ribosome-associated GTPase 2 (406 aa).

Positions 15 to 406 (FEGVGHWALS…LGQGRQPLRW (392 aa)) are localized in the mitochondria. A not localized in the mitochondria region spans residues 30–406 (KPSRLLPQQA…LGQGRQPLRW (377 aa)). The 155-residue stretch at 70 to 224 (RYFVDYRRVL…RVLHLELKTV (155 aa)) folds into the Obg domain. The OBG-type G domain occupies 225–390 (AHAGMVGFPN…LLLHLKVLYD (166 aa)). Residues 231 to 238 (GFPNAGKS), 256 to 260 (FTTLK), 278 to 281 (DIPG), 345 to 348 (NKID), and 371 to 373 (SAL) contribute to the GTP site. Mg(2+) contacts are provided by serine 238 and threonine 258.

Belongs to the TRAFAC class OBG-HflX-like GTPase superfamily. OBG GTPase family. In terms of assembly, associates with the mitochondrial ribosome large subunit; the association occurs in a GTP-dependent manner. The cofactor is Mg(2+).

The protein localises to the mitochondrion. Its subcellular location is the mitochondrion inner membrane. Plays a role in the regulation of the mitochondrial ribosome assembly and of translational activity. Displays GTPase activity. Involved in the ribosome maturation process. This is Mitochondrial ribosome-associated GTPase 2 (MTG2) from Pongo abelii (Sumatran orangutan).